We begin with the raw amino-acid sequence, 605 residues long: SET domain-containing protein SNOG_11806 (605 aa).

Positions 68–132 are disordered; the sequence is TLDLTGMKTP…SRKGTGGLRV (65 aa). Residues 75 to 89 show a composition bias toward polar residues; sequence KTPQPSRSPTVTRNV. Residues 104-115 show a composition bias toward acidic residues; sequence ESADDDDDDLQD. In terms of domain architecture, SET spans 473-579; the sequence is PPVQIYRTAE…AGSEITVDYG (107 aa).

Belongs to the class V-like SAM-binding methyltransferase superfamily.

This Phaeosphaeria nodorum (strain SN15 / ATCC MYA-4574 / FGSC 10173) (Glume blotch fungus) protein is SET domain-containing protein SNOG_11806.